We begin with the raw amino-acid sequence, 769 residues long: Phenylalanine--tRNA ligase beta subunit (769 aa).

The 102-residue stretch at 40 to 141 folds into the tRNA-binding domain; it reads GKLLTIARVA…GEPIPGCEPD (102 aa). Residues 389–467 enclose the B5 domain; it reads PAPPPIELPL…RMIGYDSIAP (79 aa). The Mg(2+) site is built by Asp445, Asp451, Glu454, and Glu455. The 93-residue stretch at 676-768 folds into the FDX-ACB domain; the sequence is RRYPSSAFDL…GMRAKGYELR (93 aa).

The protein belongs to the phenylalanyl-tRNA synthetase beta subunit family. Type 1 subfamily. As to quaternary structure, tetramer of two alpha and two beta subunits. Mg(2+) serves as cofactor.

It is found in the cytoplasm. The enzyme catalyses tRNA(Phe) + L-phenylalanine + ATP = L-phenylalanyl-tRNA(Phe) + AMP + diphosphate + H(+). The sequence is that of Phenylalanine--tRNA ligase beta subunit from Solibacter usitatus (strain Ellin6076).